The chain runs to 358 residues: Trace amine-associated receptor 7c (358 aa).

Topologically, residues 1–47 are extracellular; the sequence is MATDDDSFPWDQDSILSRDLLSASSLQLCYENLNRSCVRSPYSPGSR. An N-linked (GlcNAc...) asparagine glycan is attached at asparagine 34. 2 disulfide bridges follow: cysteine 37/cysteine 201 and cysteine 120/cysteine 205. Residues 48 to 68 form a helical membrane-spanning segment; it reads LILYAVFGFGAVLAVCGNLLV. At 69–83 the chain is on the cytoplasmic side; sequence MTSILHFRQLHSPAN. A helical transmembrane segment spans residues 84-104; it reads FLVASLACADLLVGLTVMPFS. Residues 105–125 lie on the Extracellular side of the membrane; the sequence is MVRSVEGCWYFGNTYCKFHSC. Residues 126 to 148 form a helical membrane-spanning segment; the sequence is FEGSFCYSSLFHLCFISLDRYIA. The Cytoplasmic segment spans residues 149–166; it reads VSDPLIYPTRFTASISGK. A helical membrane pass occupies residues 167-187; it reads CITFSWLLSIIYSFSLLYTGA. Over 188 to 211 the chain is Extracellular; the sequence is NEAGLEDLVSALTCVGGCQVAVNQ. The chain crosses the membrane as a helical span at residues 212–232; the sequence is SWVFINFLLFLVPALVMMTVY. Residues 233–274 are Cytoplasmic-facing; it reads SKIFLIAKQQAQNIEKMSKQTARASESYKDRVAKRERKAAKT. The helical transmembrane segment at 275–295 threads the bilayer; it reads LGIAVAAFLLSWLPYFIDSII. Topologically, residues 296–309 are extracellular; sequence DAFLGFITPTYMYE. A helical membrane pass occupies residues 310-332; sequence ILVWIVYYNSAMNPLIYAFFYPW. Topologically, residues 333-358 are cytoplasmic; that stretch reads FRKAIKLIVTGKILRENSSTINLFPE.

This sequence belongs to the G-protein coupled receptor 1 family.

The protein localises to the cell membrane. In terms of biological role, olfactory receptor specific for N,N-dimethylalkylamines trace amines. Trace amine compounds are enriched in animal body fluids and act on trace amine-associated receptors (TAARs) to elicit both intraspecific and interspecific innate behaviors. Ligand-binding causes a conformation change that triggers signaling via G(s)-class of G alpha proteins (GNAL or GNAS). In Rattus norvegicus (Rat), this protein is Trace amine-associated receptor 7c.